The sequence spans 353 residues: Photosystem II D2 protein (353 aa).

An N-acetylthreonine modification is found at threonine 2. Residue threonine 2 is modified to Phosphothreonine. The chain crosses the membrane as a helical span at residues 41–61 (CAYFALGGWFTGTTFVTSWYT). Histidine 118 contacts chlorophyll a. Residues 125-141 (GFMLRQFELARSVQLRP) traverse the membrane as a helical segment. Pheophytin a is bound by residues glutamine 130 and asparagine 143. A helical membrane pass occupies residues 153-166 (VFVSVFLIYPLGQS). Chlorophyll a is bound at residue histidine 198. A helical transmembrane segment spans residues 208–228 (AALLCAIHGATVENTLFEDGD). 2 residues coordinate a plastoquinone: histidine 215 and phenylalanine 262. Residue histidine 215 participates in Fe cation binding. Histidine 269 contributes to the Fe cation binding site. The helical transmembrane segment at 279–295 (GLWMSALGVVGLALNLR) threads the bilayer.

The protein belongs to the reaction center PufL/M/PsbA/D family. PSII is composed of 1 copy each of membrane proteins PsbA, PsbB, PsbC, PsbD, PsbE, PsbF, PsbH, PsbI, PsbJ, PsbK, PsbL, PsbM, PsbT, PsbX, PsbY, PsbZ, Psb30/Ycf12, at least 3 peripheral proteins of the oxygen-evolving complex and a large number of cofactors. It forms dimeric complexes. The cofactor is The D1/D2 heterodimer binds P680, chlorophylls that are the primary electron donor of PSII, and subsequent electron acceptors. It shares a non-heme iron and each subunit binds pheophytin, quinone, additional chlorophylls, carotenoids and lipids. There is also a Cl(-1) ion associated with D1 and D2, which is required for oxygen evolution. The PSII complex binds additional chlorophylls, carotenoids and specific lipids..

The protein resides in the plastid. It localises to the chloroplast thylakoid membrane. The enzyme catalyses 2 a plastoquinone + 4 hnu + 2 H2O = 2 a plastoquinol + O2. In terms of biological role, photosystem II (PSII) is a light-driven water:plastoquinone oxidoreductase that uses light energy to abstract electrons from H(2)O, generating O(2) and a proton gradient subsequently used for ATP formation. It consists of a core antenna complex that captures photons, and an electron transfer chain that converts photonic excitation into a charge separation. The D1/D2 (PsbA/PsbD) reaction center heterodimer binds P680, the primary electron donor of PSII as well as several subsequent electron acceptors. D2 is needed for assembly of a stable PSII complex. This chain is Photosystem II D2 protein, found in Platanus occidentalis (Sycamore).